A 176-amino-acid polypeptide reads, in one-letter code: Nucleoside triphosphate/diphosphate phosphatase (176 aa).

Arg-23 (proton donor) is an active-site residue. Residues Asn-87, Asp-103, Asp-105, Asp-107, Asp-120, and Glu-123 each contribute to the Mg(2+) site.

Belongs to the Ntdp family. It depends on Mg(2+) as a cofactor.

It catalyses the reaction a ribonucleoside 5'-triphosphate + H2O = a ribonucleoside 5'-diphosphate + phosphate + H(+). It carries out the reaction a ribonucleoside 5'-diphosphate + H2O = a ribonucleoside 5'-phosphate + phosphate + H(+). Functionally, has nucleoside phosphatase activity towards nucleoside triphosphates and nucleoside diphosphates. The protein is Nucleoside triphosphate/diphosphate phosphatase of Bacillus licheniformis (strain ATCC 14580 / DSM 13 / JCM 2505 / CCUG 7422 / NBRC 12200 / NCIMB 9375 / NCTC 10341 / NRRL NRS-1264 / Gibson 46).